Consider the following 460-residue polypeptide: MIAFNMDEHQLKHIHLIGIGGISMSAIAEILLENGYHISGSDMKESNLTHKLRDHGAEIFIGHASENIQNPDLVVYTAAVKADNPERIRAEELGIPLADRAEMLGQIMKKYEKAIAVAGSHGKTTTTSLISLLMEYSNLDPTILVGGELDEIGGNIKIGQSQHFITEACEYVESFLKFYPFIGIILNIDEDHLDYFKDIEHIKSAFKKFAQRIPKEGFLIASYDDAHVREISRDLDCHVITYGIKTKSQFMAHNIEFSFEGLPSFDVSFEGKTIGSFSLNIPGLHNVYNSLAAIATTYVLGVDPVAISKHITRFKGIHRRFDLLGEVKGAKVIDDYAHHPVEIRATLEAAKKYPHKKIWCVFQPHTYSRTQALLKDFAKSFYLADHVIITDIYAAREKDEGIVNSQGLVNLIVQEHPAQYIGGFEEISRYLYDHIEAGDIVLTMGAGDVYLIAQMLLAEK.

Position 119–125 (119–125 (GSHGKTT)) interacts with ATP.

This sequence belongs to the MurCDEF family.

It is found in the cytoplasm. It carries out the reaction UDP-N-acetyl-alpha-D-muramate + L-alanine + ATP = UDP-N-acetyl-alpha-D-muramoyl-L-alanine + ADP + phosphate + H(+). Its pathway is cell wall biogenesis; peptidoglycan biosynthesis. In terms of biological role, cell wall formation. This Alkaliphilus metalliredigens (strain QYMF) protein is UDP-N-acetylmuramate--L-alanine ligase.